The sequence spans 157 residues: Siroheme decarboxylase NirG subunit (157 aa).

The protein belongs to the Ahb/Nir family. Forms a complex composed of NirDL, NirG and NirH. All proteins are required for the total conversion of siroheme to didecarboxysiroheme.

The catalysed reaction is siroheme + 2 H(+) = 12,18-didecarboxysiroheme + 2 CO2. The protein operates within porphyrin-containing compound metabolism. Functionally, involved in heme d1 biosynthesis. Catalyzes the decarboxylation of siroheme into didecarboxysiroheme. Siroheme is probably decarboxylated to monodecarboxysiroheme, which is in turn decarboxylated to didecarboxysiroheme. This Paracoccus pantotrophus (Thiosphaera pantotropha) protein is Siroheme decarboxylase NirG subunit.